The primary structure comprises 151 residues: S-ribosylhomocysteine lyase (151 aa).

Fe cation is bound by residues His-54, His-58, and Cys-121.

This sequence belongs to the LuxS family. In terms of assembly, homodimer. It depends on Fe cation as a cofactor.

It carries out the reaction S-(5-deoxy-D-ribos-5-yl)-L-homocysteine = (S)-4,5-dihydroxypentane-2,3-dione + L-homocysteine. In terms of biological role, involved in the synthesis of autoinducer 2 (AI-2) which is secreted by bacteria and is used to communicate both the cell density and the metabolic potential of the environment. The regulation of gene expression in response to changes in cell density is called quorum sensing. Catalyzes the transformation of S-ribosylhomocysteine (RHC) to homocysteine (HC) and 4,5-dihydroxy-2,3-pentadione (DPD). The protein is S-ribosylhomocysteine lyase of Clostridium botulinum (strain Alaska E43 / Type E3).